A 116-amino-acid chain; its full sequence is Ribosome-binding factor A (116 aa).

This sequence belongs to the RbfA family. In terms of assembly, monomer. Binds 30S ribosomal subunits, but not 50S ribosomal subunits or 70S ribosomes.

The protein resides in the cytoplasm. Its function is as follows. One of several proteins that assist in the late maturation steps of the functional core of the 30S ribosomal subunit. Associates with free 30S ribosomal subunits (but not with 30S subunits that are part of 70S ribosomes or polysomes). Required for efficient processing of 16S rRNA. May interact with the 5'-terminal helix region of 16S rRNA. This Clostridium botulinum (strain Alaska E43 / Type E3) protein is Ribosome-binding factor A.